Reading from the N-terminus, the 1050-residue chain is Toll-like receptor 7 (1050 aa).

A signal peptide spans 1 to 26 (MVFSMWTRKRQILIFLNMLLVSRVFG). Topologically, residues 27-837 (FRWFPKTLPC…SLDLYTCELD (811 aa)) are extracellular. LRR repeat units follow at residues 42–64 (IPEAHVIVDCTDKHLTEIPEGIP), 65–87 (TNTTNLTLTINHIPSISPDSFRR), 89–111 (NHLEEIDLRCNCVPVLLGSKANV), 126–149 (LSDLKALYLDGNQLLEIPQDLPSS), 151–170 (HLLSLEANNIFSITKENLTE), 171–195 (LVNIETLYLGQNCYYRNPCNVSYSI), 203–226 (MRNLKVLSLKDNNVTAVPTTLPPN), 228–247 (LELYLYNNIIKKIQENDFNN), 248–273 (LNELQVLDLSGNCPRCYNVPYPCTPC), 275–289 (NNSPLQIHDNAFNSL), 290–312 (TELKVLRLHSNSLQHVPPTWFKN), 314–337 (RNLQELDLSQNYLAREIEEAKFLH), 339–364 (LPNLVELDFSFNYELQVYHASITLPH), 369–392 (LENLKILRVKGYVFKELKNSSLSV), 396–419 (LPRLEVLDLGTNFIKIADLNIFKH), 421–443 (ENLKLIDLSVNKISPSEESREVG), 493–516 (HIYGQTLDLSRNNIFFIKPSDFQH), 517–542 (LSFLKCLNLSGNTIGQTLNGSELWPL), 543–565 (RELRYLDFSNNRLDLLYSTAFEE), and 567–589 (QSLEVLDLSSNSHYFQAEGITHM). 2 N-linked (GlcNAc...) asparagine glycosylation sites follow: Asn66 and Asn69. 3 N-linked (GlcNAc...) asparagine glycosylation sites follow: Asn167, Asn190, and Asn215. Asn387 carries N-linked (GlcNAc...) asparagine glycosylation. N-linked (GlcNAc...) asparagine glycosylation is found at Asn524 and Asn535. Residue Asn591 is glycosylated (N-linked (GlcNAc...) asparagine). 8 LRR repeats span residues 596 to 619 (LRLLDKLMMNDNDISTSASRTMES), 620 to 645 (DSLRILEFRGNHLDVLWRAGDNRYLD), 650 to 673 (LFNLEVLDISRNSLNSLPPEVFEG), 675 to 698 (PPNLKNLSLAKNGLKSFFWDRLQL), 699 to 722 (LKHLEILDLSHNQLTKVPERLANC), 724 to 746 (KSLTTLILKHNQIRQLTKYFLED), 747 to 770 (ALQLRYLDISSNKIQVIQKTSFPE), and 773 to 796 (LNNLEMLVLHHNRFLCNCDAVWFV). Asn680 and Asn721 each carry an N-linked (GlcNAc...) asparagine glycan. An N-linked (GlcNAc...) asparagine glycan is attached at Asn800. A helical membrane pass occupies residues 838–858 (LTNLILFSVSISSVLFLMVVM). The Cytoplasmic segment spans residues 859–1050 (TTSHLFFWDM…AYSQMFKETV (192 aa)). In terms of domain architecture, TIR spans 890–1034 (SCYDAFIVYD…YFWQCLKNAL (145 aa)).

This sequence belongs to the Toll-like receptor family. In terms of assembly, homodimer. Interacts with MYD88 via their respective TIR domains. Interacts with UNC93B1. Interacts with SMPDL3B. Post-translationally, the first cleavage is performed by asparagine endopeptidase or cathepsin family members. This initial cleavage event is followed by a trimming event that is solely cathepsin mediated and required for optimal receptor signaling.

The protein resides in the endosome membrane. It localises to the endoplasmic reticulum membrane. It is found in the lysosome. Its subcellular location is the cytoplasmic vesicle. The protein localises to the phagosome. Its activity is regulated as follows. Activated by guanosine analogs including deoxyguanosine, 7-thia-8-oxoguanosine or 7-deazaguanosine in a RNA-independent manner. Functionally, endosomal receptor that plays a key role in innate and adaptive immunity. Controls host immune response against pathogens through recognition of uridine-containing single strand RNAs (ssRNAs) of viral origin or guanosine analogs. Upon binding to agonists, undergoes dimerization that brings TIR domains from the two molecules into direct contact, leading to the recruitment of TIR-containing downstream adapter MYD88 through homotypic interaction. In turn, the Myddosome signaling complex is formed involving IRAK4, IRAK1, TRAF6, TRAF3 leading to activation of downstream transcription factors NF-kappa-B and IRF7 to induce pro-inflammatory cytokines and interferons, respectively. In plasmacytoid dendritic cells, RNASET2 endonuclease cooperates with PLD3 or PLD4 5'-&gt;3' exonucleases to process RNA and release 2',3'-cyclic guanosine monophosphate (2',3'-cGMP) and cytidine-rich RNA fragments that occupy TLR7 ligand-binding pockets and trigger a signaling-competent state. The sequence is that of Toll-like receptor 7 (Tlr7) from Mus musculus (Mouse).